We begin with the raw amino-acid sequence, 319 residues long: L-lactate dehydrogenase 2 (319 aa).

NAD(+)-binding positions include valine 16, aspartate 37, lysine 42, tyrosine 68, and 82–83 (GA). Substrate contacts are provided by glutamine 85 and arginine 91. Residues serine 104, 121-123 (AAN), and serine 146 contribute to the NAD(+) site. Position 123–126 (123–126 (NPVD)) interacts with substrate. 151–154 (DSAR) is a substrate binding site. The active-site Proton acceptor is histidine 178. Phosphotyrosine is present on tyrosine 222. Substrate is bound at residue threonine 231.

Belongs to the LDH/MDH superfamily. LDH family. In terms of assembly, homotetramer.

It localises to the cytoplasm. The catalysed reaction is (S)-lactate + NAD(+) = pyruvate + NADH + H(+). The protein operates within fermentation; pyruvate fermentation to lactate; (S)-lactate from pyruvate: step 1/1. Its function is as follows. Catalyzes the conversion of lactate to pyruvate (Potential). Contributes to S.aureus growth during nitrosative stress in both aerobically and anaerobically cultured cells, despite playing a secondary role in this resistance mechanism. This chain is L-lactate dehydrogenase 2, found in Staphylococcus aureus (strain USA300).